A 419-amino-acid chain; its full sequence is 3-isopropylmalate dehydratase large subunit (419 aa).

The [4Fe-4S] cluster site is built by C300, C360, and C363.

It belongs to the aconitase/IPM isomerase family. LeuC type 2 subfamily. In terms of assembly, heterodimer of LeuC and LeuD. Requires [4Fe-4S] cluster as cofactor.

It catalyses the reaction (2R,3S)-3-isopropylmalate = (2S)-2-isopropylmalate. The protein operates within amino-acid biosynthesis; L-leucine biosynthesis; L-leucine from 3-methyl-2-oxobutanoate: step 2/4. In terms of biological role, catalyzes the isomerization between 2-isopropylmalate and 3-isopropylmalate, via the formation of 2-isopropylmaleate. This Clostridium botulinum (strain Alaska E43 / Type E3) protein is 3-isopropylmalate dehydratase large subunit.